The following is a 285-amino-acid chain: MAAISRAIRACAAAGSRRSMASSAKEVAAAGARAAAAVARRGREREREEDGRRVQWVFLGCPGVGKGTYASRLSQMLRVPHIATGDLVRDALASPGPFSEQLAEIVNNGKLVSDEIIINLLSKRLEEGAEKGELGFILDGFPRTIRQAEILEGVTDIDLVINLKLREEALLAKCLGRRMCSQCGGNFNVASIDMEGENGGPRMYMPPLLPPPQCESKLITRPDDTEEVVKERLRVYHDLCEPVEDFYRARGKLLEFNLPGGIPESWPKLLQALNLDPGNERSAAA.

A chloroplast-targeting transit peptide spans 1–33; that stretch reads MAAISRAIRACAAAGSRRSMASSAKEVAAAGAR. 63-68 lines the ATP pocket; sequence GVGKGT. The tract at residues 83-112 is NMP; sequence ATGDLVRDALASPGPFSEQLAEIVNNGKLV. Residues T84, R89, 110-112, 140-143, and Q147 each bind AMP; these read KLV and GFPR. The segment at 176-224 is LID; that stretch reads GRRMCSQCGGNFNVASIDMEGENGGPRMYMPPLLPPPQCESKLITRPDD. Residues R177 and 186–187 contribute to the ATP site; that span reads NF. The AMP site is built by R221 and R232.

It belongs to the adenylate kinase family.

The protein localises to the plastid. It is found in the chloroplast. The catalysed reaction is AMP + ATP = 2 ADP. Functionally, catalyzes the reversible transfer of the terminal phosphate group between ATP and AMP. Plays an important role in cellular energy homeostasis and in adenine nucleotide metabolism. The polypeptide is Probable adenylate kinase 6, chloroplastic (Oryza sativa subsp. japonica (Rice)).